Here is a 669-residue protein sequence, read N- to C-terminus: DNA ligase (669 aa).

NAD(+)-binding positions include 31–35, 80–81, and Glu-112; these read DSVYD and SL. Lys-114 (N6-AMP-lysine intermediate) is an active-site residue. 4 residues coordinate NAD(+): Arg-135, Glu-172, Lys-289, and Lys-313. Positions 407, 410, 425, and 430 each coordinate Zn(2+). In terms of domain architecture, BRCT spans 591–669; that stretch reads TDSGKLKGKT…EAEFLQLLEP (79 aa).

It belongs to the NAD-dependent DNA ligase family. LigA subfamily. Mg(2+) is required as a cofactor. The cofactor is Mn(2+).

The catalysed reaction is NAD(+) + (deoxyribonucleotide)n-3'-hydroxyl + 5'-phospho-(deoxyribonucleotide)m = (deoxyribonucleotide)n+m + AMP + beta-nicotinamide D-nucleotide.. In terms of biological role, DNA ligase that catalyzes the formation of phosphodiester linkages between 5'-phosphoryl and 3'-hydroxyl groups in double-stranded DNA using NAD as a coenzyme and as the energy source for the reaction. It is essential for DNA replication and repair of damaged DNA. The protein is DNA ligase of Synechocystis sp. (strain ATCC 27184 / PCC 6803 / Kazusa).